The primary structure comprises 625 residues: Procollagen galactosyltransferase 2 (625 aa).

The first 26 residues, 1–26 (MAARLATVACALFLLSSALLRLGCRA), serve as a signal peptide directing secretion. 4 N-linked (GlcNAc...) asparagine glycosylation sites follow: Asn-96, Asn-184, Asn-381, and Asn-579. Residues 597–625 (QGHIRSTAKNTEALPPPTSLDTVPSRDEL) form a disordered region. Residues 622–625 (RDEL) carry the Prevents secretion from ER motif.

The protein belongs to the glycosyltransferase 25 family.

Its subcellular location is the endoplasmic reticulum lumen. The enzyme catalyses (5R)-5-hydroxy-L-lysyl-[collagen] + UDP-alpha-D-galactose = (5R)-5-O-(beta-D-galactosyl)-5-hydroxy-L-lysyl-[collagen] + UDP + H(+). Its function is as follows. Beta-galactosyltransferase that transfers beta-galactose to hydroxylysine residues of collagen. The polypeptide is Procollagen galactosyltransferase 2 (Colgalt2) (Mus musculus (Mouse)).